The following is a 336-amino-acid chain: N-lysine methyltransferase KMT5A-B (336 aa).

Disordered regions lie at residues 1–107 and 141–165; these read MGRG…SSKQ and QSQK…NRKL. The segment covering 67-93 has biased composition (basic and acidic residues); that stretch reads SVAHHESKNLGKPTTETRKKAEVEKKR. Polar residues predominate over residues 95–104; that stretch reads SSATELSVKS. The span at 146–162 shows a compositional bias: basic residues; it reads VKNKSQRRKAQRKKSPN. Residues 200 to 321 enclose the SET domain; the sequence is DGMKMDMIIG…VGEELLYDYG (122 aa). Residues 210–212, Tyr-255, and 282–283 contribute to the S-adenosyl-L-methionine site; these read KGR and NH.

The protein belongs to the class V-like SAM-binding methyltransferase superfamily. Histone-lysine methyltransferase family. PR/SET subfamily. Post-translationally, phosphorylated during mitosis.

It localises to the nucleus. The protein resides in the chromosome. It catalyses the reaction L-lysyl(20)-[histone H4] + S-adenosyl-L-methionine = N(6)-methyl-L-lysyl(20)-[histone H4] + S-adenosyl-L-homocysteine + H(+). The enzyme catalyses L-lysyl-[protein] + S-adenosyl-L-methionine = N(6)-methyl-L-lysyl-[protein] + S-adenosyl-L-homocysteine + H(+). In terms of biological role, protein-lysine N-methyltransferase that monomethylates both histones and non-histone proteins. Specifically monomethylates 'Lys-20' of histone H4 (H4K20me1). H4K20me1 is enriched during mitosis and represents a specific tag for epigenetic transcriptional repression. Mainly functions in euchromatin regions, thereby playing a central role in the silencing of euchromatic genes. Required for cell proliferation, probably by contributing to the maintenance of proper higher-order structure of DNA during mitosis. Involved in chromosome condensation and proper cytokinesis. This chain is N-lysine methyltransferase KMT5A-B, found in Xenopus laevis (African clawed frog).